The chain runs to 687 residues: Ferric transport system permease protein FbpB (687 aa).

19 helical membrane passes run 10–30 (LFES…ALPS), 50–70 (GWSS…FWLL), 85–105 (LGLI…YKVS), 106–126 (MGYS…FAFA), 141–161 (LLSI…AIFI), 192–212 (LFLS…FALY), 226–246 (IFSI…VTLM), 271–291 (GFNG…FMIL), 318–338 (YNII…IVFI), 347–367 (PLVL…YIAG), 378–398 (LGSM…MWIG), 425–445 (IIVM…SIFY), 450–472 (VNWG…QGLS), 484–504 (IYAG…AYIV), 517–537 (FLTM…YILA), 538–558 (FNDA…SMVM), 594–614 (IWFI…VTSF), 620–640 (TVSA…AYIL), and 649–669 (GVAI…ILFF). Residues 188–393 (ISNSLFLSGF…IFSLLIFIVQ (206 aa)) form the ABC transmembrane type-1 1 domain. The ABC transmembrane type-1 2 domain maps to 479 to 669 (LINTMIYAGI…VVMMAIILFF (191 aa)).

Belongs to the binding-protein-dependent transport system permease family. FbpB subfamily. As to quaternary structure, the complex is composed of two ATP-binding proteins (FbpC), two transmembrane proteins (FbpB) and a solute-binding protein (FbpA).

The protein localises to the cell inner membrane. Functionally, part of the ABC transporter complex FbpABC (TC 3.A.1.10.1) involved in Fe(3+) ions import. Probably responsible for the translocation of the substrate across the membrane. This Actinobacillus pleuropneumoniae (Haemophilus pleuropneumoniae) protein is Ferric transport system permease protein FbpB (fbpB).